We begin with the raw amino-acid sequence, 463 residues long: Golgi-associated PDZ and coiled-coil motif-containing protein (463 aa).

Position 2 is an N-acetylserine (Ser2). Positions Ala85–Val201 form a coiled coil. In terms of domain architecture, PDZ spans Lys289–Ala372. Phosphoserine is present on residues Ser402 and Ser405.

As to quaternary structure, homooligomer. Interacts with FZD5. Interacts with FZD8. Interacts with GRID2 and BECN1. Interacts with CSPG5. Interacts with CLCN3. Interacts with STX6. Interacts with CFTR. Interacts with ASIC3. Interacts with GOLGA3. Interacts with NLGN1. Interacts with RHOQ. Interacts with MARCHF2; the interaction leads to CFTR ubiquitination and degradation. May interact with CACNG2. Interacts with CCDC62. As to expression, ubiquitously expressed (at protein level). Expressed in dorsal root glanglion (DRG), spinal cord and brain. Isoform 1 is preferentially expressed in whole brain (at protein level) and cerebellum. Expressed in spermatocytes and spermatides but not in Sertoli cells and spermatogonia.

Its subcellular location is the cytoplasm. The protein localises to the golgi apparatus membrane. It localises to the golgi apparatus. The protein resides in the trans-Golgi network membrane. It is found in the synapse. Its subcellular location is the postsynaptic density. The protein localises to the cell projection. It localises to the dendrite. Its function is as follows. Plays a role in intracellular protein trafficking and degradation. May regulate CFTR chloride currents and acid-induced ASIC3 currents by modulating cell surface expression of both channels. May also regulate the intracellular trafficking of the ADR1B receptor. May play a role in autophagy. Together with MARCHF2 mediates the ubiquitination and lysosomal degradation of CFTR. Overexpression results in CFTR intracellular retention and degradation in the lysosomes. This is Golgi-associated PDZ and coiled-coil motif-containing protein from Mus musculus (Mouse).